The sequence spans 738 residues: Zinc finger protein 235 (738 aa).

One can recognise a KRAB domain in the interval 8–79 (VTFKDVAVAF…ELQTQRGKHS (72 aa)). The C2H2-type 1; degenerate zinc finger occupies 263–285 (YQGNECEEAFNDSSSLELHKQVH). 15 consecutive C2H2-type zinc fingers follow at residues 319-341 (YWCH…QRVH), 347-369 (YTCH…LPIH), 375-397 (YRCD…CRVH), 403-425 (YKCE…ERIH), 431-453 (YKCG…QRVH), 459-481 (YKCD…QRVH), 487-509 (YKCE…QRVH), 515-537 (FRCN…QRVH), 543-565 (YKCE…QRVH), 571-593 (YKCE…QSVH), 599-621 (FKCD…QRVH), 627-649 (YKCD…QIIH), 655-677 (FKCE…QRVH), 683-705 (YTCQ…QRVH), and 711-733 (YICD…QRVH).

It belongs to the krueppel C2H2-type zinc-finger protein family.

It localises to the nucleus. May be involved in transcriptional regulation. The chain is Zinc finger protein 235 (ZNF235) from Homo sapiens (Human).